Here is a 163-residue protein sequence, read N- to C-terminus: Cyclic pyranopterin monophosphate synthase (163 aa).

Substrate contacts are provided by residues 79–81 (LCH) and 118–119 (ME). Asp-133 is an active-site residue.

This sequence belongs to the MoaC family. Homohexamer; trimer of dimers.

The enzyme catalyses (8S)-3',8-cyclo-7,8-dihydroguanosine 5'-triphosphate = cyclic pyranopterin phosphate + diphosphate. It participates in cofactor biosynthesis; molybdopterin biosynthesis. Catalyzes the conversion of (8S)-3',8-cyclo-7,8-dihydroguanosine 5'-triphosphate to cyclic pyranopterin monophosphate (cPMP). The chain is Cyclic pyranopterin monophosphate synthase from Nocardioides sp. (strain ATCC BAA-499 / JS614).